Reading from the N-terminus, the 322-residue chain is Undecaprenyl-phosphate 4-deoxy-4-formamido-L-arabinose transferase (322 aa).

Topologically, residues 1 to 235 (MFEIHPVKKV…TCLTTTPLRM (235 aa)) are cytoplasmic. A helical transmembrane segment spans residues 236–256 (LSLLGSIIAIGGFSIAVLLVI). The Periplasmic portion of the chain corresponds to 257–269 (LRLTFGPQWAAEG). Residues 270–290 (VFMLFAVLFTFIGAQFIGMGL) form a helical membrane-spanning segment. Topologically, residues 291–322 (LGEYIGRIYTDVRARPRYFVQQVIRPSSKENE) are cytoplasmic.

It belongs to the glycosyltransferase 2 family.

The protein resides in the cell inner membrane. It catalyses the reaction UDP-4-deoxy-4-formamido-beta-L-arabinose + di-trans,octa-cis-undecaprenyl phosphate = 4-deoxy-4-formamido-alpha-L-arabinopyranosyl di-trans,octa-cis-undecaprenyl phosphate + UDP. It participates in glycolipid biosynthesis; 4-amino-4-deoxy-alpha-L-arabinose undecaprenyl phosphate biosynthesis; 4-amino-4-deoxy-alpha-L-arabinose undecaprenyl phosphate from UDP-4-deoxy-4-formamido-beta-L-arabinose and undecaprenyl phosphate: step 1/2. The protein operates within bacterial outer membrane biogenesis; lipopolysaccharide biosynthesis. In terms of biological role, catalyzes the transfer of 4-deoxy-4-formamido-L-arabinose from UDP to undecaprenyl phosphate. The modified arabinose is attached to lipid A and is required for resistance to polymyxin and cationic antimicrobial peptides. The protein is Undecaprenyl-phosphate 4-deoxy-4-formamido-L-arabinose transferase of Escherichia coli O139:H28 (strain E24377A / ETEC).